A 205-amino-acid chain; its full sequence is Small ribosomal subunit protein uS4 (205 aa).

The tract at residues 1–46 (MSKRHSAKYKIDRRMGENLWGRPKSPVNQRSYGPGQHGQRRKQKVS) is disordered. One can recognise an S4 RNA-binding domain in the interval 94 to 154 (SRLDAIVYRA…EKSRNMALVL (61 aa)).

Belongs to the universal ribosomal protein uS4 family. As to quaternary structure, part of the 30S ribosomal subunit. Contacts protein S5. The interaction surface between S4 and S5 is involved in control of translational fidelity.

Functionally, one of the primary rRNA binding proteins, it binds directly to 16S rRNA where it nucleates assembly of the body of the 30S subunit. Its function is as follows. With S5 and S12 plays an important role in translational accuracy. The protein is Small ribosomal subunit protein uS4 of Caulobacter sp. (strain K31).